The primary structure comprises 657 residues: Iron-sulfur cluster biogenesis chaperone, mitochondrial (657 aa).

It belongs to the heat shock protein 70 family. In terms of assembly, interacts with the Fe/S cluster assembly proteins ISU1, MGE1, GRX5 and JAC1.

It localises to the mitochondrion matrix. The catalysed reaction is ATP + H2O = ADP + phosphate + H(+). Its function is as follows. Required for the assembly of iron-sulfur (Fe/S) clusters in mitochondria. Assisted by the DnaJ-like co-chaperone JAC1 and the nucleotide exchange factor MGE1, it mediates ATP-dependent Fe-S cluster transfer from the scaffold proteins ISU1/ISU2 to GRX5. This Saccharomyces cerevisiae (strain ATCC 204508 / S288c) (Baker's yeast) protein is Iron-sulfur cluster biogenesis chaperone, mitochondrial.